The following is a 251-amino-acid chain: Ditrans,polycis-undecaprenyl-diphosphate synthase ((2E,6E)-farnesyl-diphosphate specific) (251 aa).

Residue Asp-21 is part of the active site. A Mg(2+)-binding site is contributed by Asp-21. Residues 22–25, Trp-26, His-38, and 66–68 each bind substrate; these read GNNR and SSE. Asn-69 (proton acceptor) is an active-site residue. Substrate-binding positions include Trp-70, Arg-72, Arg-189, and 195–197; that span reads RIS. Residue Glu-208 participates in Mg(2+) binding.

This sequence belongs to the UPP synthase family. Homodimer. It depends on Mg(2+) as a cofactor.

It carries out the reaction 8 isopentenyl diphosphate + (2E,6E)-farnesyl diphosphate = di-trans,octa-cis-undecaprenyl diphosphate + 8 diphosphate. In terms of biological role, catalyzes the sequential condensation of isopentenyl diphosphate (IPP) with (2E,6E)-farnesyl diphosphate (E,E-FPP) to yield (2Z,6Z,10Z,14Z,18Z,22Z,26Z,30Z,34E,38E)-undecaprenyl diphosphate (di-trans,octa-cis-UPP). UPP is the precursor of glycosyl carrier lipid in the biosynthesis of bacterial cell wall polysaccharide components such as peptidoglycan and lipopolysaccharide. This Pseudomonas syringae pv. tomato (strain ATCC BAA-871 / DC3000) protein is Ditrans,polycis-undecaprenyl-diphosphate synthase ((2E,6E)-farnesyl-diphosphate specific).